The following is a 191-amino-acid chain: UPF0149 protein VS_2635 (191 aa).

The protein belongs to the UPF0149 family.

The sequence is that of UPF0149 protein VS_2635 from Vibrio atlanticus (strain LGP32) (Vibrio splendidus (strain Mel32)).